Reading from the N-terminus, the 507-residue chain is MAEEQAYHVNKGLECIKALRARPLDPLVVEEALAAWVETSEGQTLDRMSSDEAEADHQDISKPCFPAAGPGKSSMSRCHDQGLRGSNSCDEELGAFIGDSSMHSTEVQHYHVYDHSGEKVEGVEDADSILVQSGADDGVEVWGGDEESENSDVDSGEPDPEGSAPADWGSSPISPATRASDVETVEGDEIQKLLEDQSRIRKMTKAGKTLVVPPIPSQERPTASEKPIKKGTDVKSTSSGTMAESSSTGGATRPALKSQWGPSGPNASAENALASASNVSPTQGSKTESGTTTSRISQSNIEPEDDYDDELFSDIQDIKTALAKLHDDQQIIITRLESLLSLKGEIDSIKKQISKQNISISTIEGHLSSFMIAIPGFGKDPNDPTADVDINPDLRPIIGRDSGRALAEVLKKPASERQSKDTGKLGIESKGLLKKEFQLKPIEKKSSSAIRFVPDGSVASRSVIRSIIKSSHLGEDRKDYLMSLLNDIQGSKDLAQFHQMLVKILKN.

The segment at aspartate 56–histidine 79 is disordered. Serine 86 and serine 151 each carry phosphoserine. Residues aspartate 137 to proline 160 show a composition bias toward acidic residues. Residues aspartate 137–tyrosine 307 are disordered. Basic and acidic residues-rich tracts occupy residues glutamate 189 to arginine 199 and threonine 222 to aspartate 233. Low complexity-rich tracts occupy residues serine 236 to threonine 252 and asparagine 266 to asparagine 278. Residues valine 279–isoleucine 301 are compositionally biased toward polar residues. Positions glutamate 304–glycine 376 are multimerization. The interaction with the nucleocapsid (N-RNA) stretch occupies residues alanine 459–asparagine 507.

It belongs to the morbillivirus P protein family. As to quaternary structure, homotetramer. Interacts (via multimerization domain) with polymerase L; this interaction forms the polymerase L-P complex. Interacts (via N-terminus) with N0 (via Ncore); this interaction allows P to chaperon N0 to avoid N polymerization before encapsidation. Interacts (via C-terminus) with N-RNA template; this interaction positions the polymerase on the template for both transcription and replication. Phosphorylation on serines by host CK2 is necessary for the formation of viral factories.

Its function is as follows. Essential cofactor of the RNA polymerase L that plays a central role in the transcription and replication by forming the polymerase complex with RNA polymerase L and recruiting L to the genomic N-RNA template for RNA synthesis. Also plays a central role in the encapsidation of nascent RNA chains by forming the encapsidation complex with the nucleocapsid protein N (N-P complex). Acts as a chaperone for newly synthesized free N protein, so-called N0, allowing encapsidation of nascent RNA chains during replication. The nucleoprotein protein N prevents excessive phosphorylation of P, which leads to down-regulation of viral transcription/ replication. Participates, together with N, in the formation of viral factories (viroplasms), which are large inclusions in the host cytoplasm where replication takes place. The chain is Phosphoprotein (P/V) from Bos indicus (Zebu).